The following is a 156-amino-acid chain: Ribonuclease pancreatic (156 aa).

The N-terminal stretch at 1 to 28 (MALEKSLVLLPLLVLILLVLGWVQPSLG) is a signal peptide. Over residues 33 to 43 (AKKFQRQHVDS) the composition is skewed to basic and acidic residues. Residues 33–53 (AKKFQRQHVDSDSSPSSSSTY) form a disordered region. Substrate contacts are provided by K35 and R38. H40 serves as the catalytic Proton acceptor. Disulfide bonds link C54-C112, C68-C123, C86-C138, and C93-C100. A glycan (N-linked (GlcNAc...) asparagine) is linked at N62. Residues 69–73 (KPVNT) and K94 each bind substrate. N-linked (GlcNAc...) asparagine glycosylation is present at N104. R113 serves as a coordination point for substrate. A glycan (N-linked (GlcNAc...) asparagine) is linked at N116. H147 functions as the Proton donor in the catalytic mechanism.

This sequence belongs to the pancreatic ribonuclease family. As to quaternary structure, monomer. Interacts with and forms tight 1:1 complexes with RNH1. Dimerization of two such complexes may occur. Interaction with RNH1 inhibits this protein. In terms of tissue distribution, pancreas and other tissues and body fluids (indicating it may have other physiological functions besides its role in digestion).

The protein resides in the secreted. The catalysed reaction is an [RNA] containing cytidine + H2O = an [RNA]-3'-cytidine-3'-phosphate + a 5'-hydroxy-ribonucleotide-3'-[RNA].. The enzyme catalyses an [RNA] containing uridine + H2O = an [RNA]-3'-uridine-3'-phosphate + a 5'-hydroxy-ribonucleotide-3'-[RNA].. Its function is as follows. Endonuclease that catalyzes the cleavage of RNA on the 3' side of pyrimidine nucleotides. Acts on single-stranded and double-stranded RNA. The sequence is that of Ribonuclease pancreatic (RNASE1) from Pan troglodytes (Chimpanzee).